The sequence spans 1420 residues: DNA-directed RNA polymerase subunit beta' (1420 aa).

Zn(2+) is bound by residues Cys-71, Cys-73, Cys-86, and Cys-89. Positions 461, 463, and 465 each coordinate Mg(2+). The Zn(2+) site is built by Cys-815, Cys-889, Cys-896, and Cys-899.

The protein belongs to the RNA polymerase beta' chain family. As to quaternary structure, the RNAP catalytic core consists of 2 alpha, 1 beta, 1 beta' and 1 omega subunit. When a sigma factor is associated with the core the holoenzyme is formed, which can initiate transcription. It depends on Mg(2+) as a cofactor. Zn(2+) is required as a cofactor.

The catalysed reaction is RNA(n) + a ribonucleoside 5'-triphosphate = RNA(n+1) + diphosphate. Its function is as follows. DNA-dependent RNA polymerase catalyzes the transcription of DNA into RNA using the four ribonucleoside triphosphates as substrates. In Histophilus somni (strain 129Pt) (Haemophilus somnus), this protein is DNA-directed RNA polymerase subunit beta'.